Reading from the N-terminus, the 351-residue chain is MPSETLWEIAKAEVEKRRCHGSDGDGMEIGEKSVFFIGSKNGGKTTIILRCLDRDEPAKPTLALEYTYGRKTKGHNTPKDIAHFWELGGGTSLLDLISIPITVDTLRTFSIVLVLDLSKPNDLWPTMENLLQATKSHVDKVTMKLGKANSKASSEMRQRMWSVMQKDHPDRELIDPFPIPLVIIGSKYDIFQDFDPEKRKVICKTLRFVAHYYGASLMFTSKSEALLLKMRGVINQLAFGIDKSKSMCVDQNKPLFITAGLDSLCQIGSPPVPDSDIGKLQAHSPMELWKKVYEKLFPPKSTSTLKAIQDPARDPQYAESEVDEMRVQKDQELEQYKRSSSKTWKQIELDS.

Residues 304-335 (TLKAIQDPARDPQYAESEVDEMRVQKDQELEQ) are disordered. Residues 323–335 (DEMRVQKDQELEQ) are compositionally biased toward basic and acidic residues.

It belongs to the dynein light intermediate chain family. Light intermediate chain of the cytoplasmic dynein complex 2, a multisubunit complex composed at least of eleven different proteins. The cytoplasmic dynein 2 complex consists of two catalytic heavy chains (HCs) and a number of non-catalytic subunits presented by intermediate chains (ICs), light intermediate chains (LICs) and light chains (LCs). Among them, a heavy chain (DYNC2H1), two intermediate chains (DYNC2I2 and DYNC2I1), a light intermediate chain (DYNC2LI1), and a light chain (DYNLT2B) are unique to the dynein-2 complex, but a subset of light chains are also shared by dynein-1 and dynein-2 complexes. Dynein-2 complex is built around two copies of cytoplasmic dynein 2 heavy chain 1 (DYNC2H1). The C-terminal region forms the motor domain, which converts the energy from ATP hydrolysis into movement. Its N-terminal region forms the tail, an extended structure that binds the other subunits and holds the two heavy chains in a homodimer. Interacts with DYNC2H1 (via N-terminus); this interaction stabilizes the dynein-2 complex structure.

Its subcellular location is the cytoplasm. The protein resides in the cell projection. It is found in the cilium. The protein localises to the cytoskeleton. It localises to the cilium basal body. Its subcellular location is the cilium axoneme. The protein resides in the microtubule organizing center. It is found in the centrosome. Functionally, acts as one of several non-catalytic accessory components of the cytoplasmic dynein 2 complex (dynein-2 complex), a motor protein complex that drives the movement of cargos along microtubules within cilia and flagella in concert with the intraflagellar transport (IFT) system, facilitating the assembly of these organelles. Involved in the regulation of ciliary length. The protein is Cytoplasmic dynein 2 light intermediate chain 1 (Dync2li1) of Rattus norvegicus (Rat).